Reading from the N-terminus, the 487-residue chain is Glutamyl-tRNA(Gln) amidotransferase subunit A (487 aa).

The active-site Charge relay system is Lys78. Over residues 135–144 (SAYQTTTNPW) the composition is skewed to polar residues. Positions 135–155 (SAYQTTTNPWDASRVPGGSSG) are disordered. Catalysis depends on Ser153, which acts as the Charge relay system. The Acyl-ester intermediate role is filled by Ser177.

Belongs to the amidase family. GatA subfamily. As to quaternary structure, heterotrimer of A, B and C subunits.

The catalysed reaction is L-glutamyl-tRNA(Gln) + L-glutamine + ATP + H2O = L-glutaminyl-tRNA(Gln) + L-glutamate + ADP + phosphate + H(+). Functionally, allows the formation of correctly charged Gln-tRNA(Gln) through the transamidation of misacylated Glu-tRNA(Gln) in organisms which lack glutaminyl-tRNA synthetase. The reaction takes place in the presence of glutamine and ATP through an activated gamma-phospho-Glu-tRNA(Gln). The protein is Glutamyl-tRNA(Gln) amidotransferase subunit A of Maridesulfovibrio salexigens (strain ATCC 14822 / DSM 2638 / NCIMB 8403 / VKM B-1763) (Desulfovibrio salexigens).